A 414-amino-acid chain; its full sequence is Calcium/calmodulin-dependent protein kinase cmkA (414 aa).

The Protein kinase domain maps to 23–278 (YRFGRTLGAG…SEEALKHPWL (256 aa)). ATP contacts are provided by residues 29–37 (LGAGTYGIV) and K50. D142 acts as the Proton acceptor in catalysis. An autoinhibitory domain region spans residues 278 to 314 (LKGESASDRDLLPEIRAYIARSRLKRGIEIIKLANRI). The interval 293–315 (RAYIARSRLKRGIEIIKLANRIE) is calmodulin-binding. 2 disordered regions span residues 320–375 (QEED…KRSL) and 394–414 (EMKE…RAHS). Residues 351-364 (STENSNTHPASTGN) show a composition bias toward polar residues.

This sequence belongs to the protein kinase superfamily. CAMK Ser/Thr protein kinase family. CaMK subfamily. Monomer. Autophosphorylated in a calcium/calmodulin-dependent manner.

The enzyme catalyses L-seryl-[protein] + ATP = O-phospho-L-seryl-[protein] + ADP + H(+). It carries out the reaction L-threonyl-[protein] + ATP = O-phospho-L-threonyl-[protein] + ADP + H(+). With respect to regulation, activated by Ca(2+)/calmodulin. Binding of calmodulin may relieve intrasteric autoinhibition. Functionally, calcium/calmodulin-dependent protein kinase. Required in nuclear division cycle for progression from G2 to mitosis. Required for hyphal growth. In Emericella nidulans (strain FGSC A4 / ATCC 38163 / CBS 112.46 / NRRL 194 / M139) (Aspergillus nidulans), this protein is Calcium/calmodulin-dependent protein kinase cmkA (cmkA).